The sequence spans 179 residues: Large ribosomal subunit protein uL5 (179 aa).

The protein belongs to the universal ribosomal protein uL5 family. In terms of assembly, part of the 50S ribosomal subunit; part of the 5S rRNA/L5/L18/L25 subcomplex. Contacts the 5S rRNA and the P site tRNA. Forms a bridge to the 30S subunit in the 70S ribosome.

Functionally, this is one of the proteins that bind and probably mediate the attachment of the 5S RNA into the large ribosomal subunit, where it forms part of the central protuberance. In the 70S ribosome it contacts protein S13 of the 30S subunit (bridge B1b), connecting the 2 subunits; this bridge is implicated in subunit movement. Contacts the P site tRNA; the 5S rRNA and some of its associated proteins might help stabilize positioning of ribosome-bound tRNAs. The chain is Large ribosomal subunit protein uL5 from Saccharophagus degradans (strain 2-40 / ATCC 43961 / DSM 17024).